The following is a 498-amino-acid chain: Glycerol kinase (498 aa).

Residue T11 participates in ADP binding. ATP contacts are provided by T11, T12, and S13. A sn-glycerol 3-phosphate-binding site is contributed by T11. R15 contacts ADP. Sn-glycerol 3-phosphate contacts are provided by R81, E82, Y133, and D242. Glycerol contacts are provided by R81, E82, Y133, D242, and Q243. ADP-binding residues include T264 and G307. The ATP site is built by T264, G307, Q311, and G411. G411 is a binding site for ADP.

The protein belongs to the FGGY kinase family.

It catalyses the reaction glycerol + ATP = sn-glycerol 3-phosphate + ADP + H(+). It functions in the pathway polyol metabolism; glycerol degradation via glycerol kinase pathway; sn-glycerol 3-phosphate from glycerol: step 1/1. Inhibited by fructose 1,6-bisphosphate (FBP). Its function is as follows. Key enzyme in the regulation of glycerol uptake and metabolism. Catalyzes the phosphorylation of glycerol to yield sn-glycerol 3-phosphate. The chain is Glycerol kinase from Afipia carboxidovorans (strain ATCC 49405 / DSM 1227 / KCTC 32145 / OM5) (Oligotropha carboxidovorans).